The sequence spans 292 residues: Peroxisomal 2,4-dienoyl-CoA reductase SPS19 [(3E)-enoyl-CoA-producing] (292 aa).

Residues isoleucine 36, aspartate 85, and lysine 145 each coordinate NADP(+). The active-site Proton donor is the serine 162. Residue lysine 180 coordinates NADP(+). Lysine 180 serves as the catalytic Lowers pKa of active site Tyr. A Glycyl lysine isopeptide (Lys-Gly) (interchain with G-Cter in ubiquitin) cross-link involves residue lysine 188. Isoleucine 209 serves as a coordination point for NADP(+). The short motif at serine 290 to leucine 292 is the Microbody targeting signal element.

The protein belongs to the short-chain dehydrogenases/reductases (SDR) family. Homodimer.

It is found in the peroxisome. It carries out the reaction a (2E,4Z)-dienoyl-CoA + NADPH + H(+) = a 4,5-saturated-(3E)-enoyl-CoA + NADP(+). It catalyses the reaction a (2E,4E)-dienoyl-CoA + NADPH + H(+) = a 4,5-saturated-(3E)-enoyl-CoA + NADP(+). In terms of biological role, auxiliary enzyme of beta-oxidation. Participates in the degradation of unsaturated fatty enoyl-CoA esters having double bonds in both even- and odd-numbered positions in peroxisome. Catalyzes the NADP-dependent reduction of 2,4-dienoyl-CoA to yield trans-3-enoyl-CoA. Dispensable for growth and sporulation on solid acetate and oleate media, but is essential for these processes to occur on petroselineate. This Saccharomyces cerevisiae (strain ATCC 204508 / S288c) (Baker's yeast) protein is Peroxisomal 2,4-dienoyl-CoA reductase SPS19 [(3E)-enoyl-CoA-producing] (SPS19).